A 278-amino-acid chain; its full sequence is Large ribosomal subunit protein uL2 (278 aa).

Disordered regions lie at residues 1–20 (MAIR…SVSD), 25–57 (TRST…RGGG), and 224–278 (VVMN…GKKR). Composition is skewed to basic residues over residues 45–57 (AHGR…RGGG) and 269–278 (VRRRKTGKKR).

The protein belongs to the universal ribosomal protein uL2 family. Part of the 50S ribosomal subunit. Forms a bridge to the 30S subunit in the 70S ribosome.

Its function is as follows. One of the primary rRNA binding proteins. Required for association of the 30S and 50S subunits to form the 70S ribosome, for tRNA binding and peptide bond formation. It has been suggested to have peptidyltransferase activity; this is somewhat controversial. Makes several contacts with the 16S rRNA in the 70S ribosome. This is Large ribosomal subunit protein uL2 from Nocardia farcinica (strain IFM 10152).